Consider the following 309-residue polypeptide: Porphobilinogen deaminase (309 aa).

S-(dipyrrolylmethanemethyl)cysteine is present on C241.

Belongs to the HMBS family. As to quaternary structure, monomer. Dipyrromethane is required as a cofactor.

It catalyses the reaction 4 porphobilinogen + H2O = hydroxymethylbilane + 4 NH4(+). The protein operates within porphyrin-containing compound metabolism; protoporphyrin-IX biosynthesis; coproporphyrinogen-III from 5-aminolevulinate: step 2/4. In terms of biological role, tetrapolymerization of the monopyrrole PBG into the hydroxymethylbilane pre-uroporphyrinogen in several discrete steps. This chain is Porphobilinogen deaminase, found in Bacillus thuringiensis (strain Al Hakam).